The sequence spans 92 residues: Small ribosomal subunit protein uS19 (92 aa).

Belongs to the universal ribosomal protein uS19 family.

Functionally, protein S19 forms a complex with S13 that binds strongly to the 16S ribosomal RNA. The protein is Small ribosomal subunit protein uS19 of Klebsiella pneumoniae (strain 342).